The sequence spans 327 residues: MHPQQLVVSWFSLVLLASPIVAIWELEKNVYIVELDWYPDAPGETVVLTCDTPEEDGITWTSDQSSEVLGSGKTLTIQVKEFGDAGQYTCHKGGEALSRSLLLLHKKEDGIWSTDILKDQKEPKAKSFLKCEAKDYSGHFTCWWLTAISTDLKFSVKSSRGSADPRGVTCGAASLSAEKVSVDHREYNKYTVECQEGSTCPAAEESLLIEVVVEAVHKLKYENYTSSFFIRDIIKPDPPKNLQLKPLKNSRQVEVSWEYPDTWSTPHSYFSLTFCVQVQGKNKREKKLFMDQTSAKVTCHKDANVRVQARDRYYSSFWSEWASVSCS.

The first 22 residues, 1-22 (MHPQQLVVSWFSLVLLASPIVA), serve as a signal peptide directing secretion. Residues 23-106 (IWELEKNVYI…LSRSLLLLHK (84 aa)) form the Ig-like C2-type domain. Cysteines 50 and 90 form a disulfide. N-linked (GlcNAc...) asparagine glycosylation is present at asparagine 223. Residues 238-327 (PPKNLQLKPL…WSEWASVSCS (90 aa)) form the Fibronectin type-III domain.

Belongs to the IL-12B family. As to quaternary structure, heterodimer with IL12A; disulfide-linked. The heterodimer is known as interleukin IL-12. Heterodimer with IL23A; disulfide-linked. The heterodimer is known as interleukin IL-23. Also secreted as a monomer. Interacts with NBR1; this interaction promotes IL-12 secretion.

Its function is as follows. Cytokine that can act as a growth factor for activated T and NK cells, enhance the lytic activity of NK/lymphokine-activated killer cells, and stimulate the production of IFN-gamma by resting PBMC. Associates with IL23A to form the IL-23 interleukin, a heterodimeric cytokine which functions in innate and adaptive immunity. IL-23 may constitute with IL-17 an acute response to infection in peripheral tissues. IL-23 binds to a heterodimeric receptor complex composed of IL12RB1 and IL23R, activates the Jak-Stat signaling cascade, stimulates memory rather than naive T-cells and promotes production of pro-inflammatory cytokines. IL-23 induces autoimmune inflammation and thus may be responsible for autoimmune inflammatory diseases and may be important for tumorigenesis. The polypeptide is Interleukin-12 subunit beta (IL12B) (Bubalus bubalis (Domestic water buffalo)).